A 147-amino-acid polypeptide reads, in one-letter code: Ras-related protein RabK2 (147 aa).

Residues 11 to 15 (NTHGS) and 63 to 66 (TKSD) contribute to the GTP site. Cys145 carries the S-geranylgeranyl cysteine lipid modification.

It belongs to the small GTPase superfamily. Rab family.

It localises to the cell membrane. The chain is Ras-related protein RabK2 (rabK2) from Dictyostelium discoideum (Social amoeba).